The primary structure comprises 454 residues: MFIHPEEILETLKMVNNEHLDIRTVTMGISLRGCCHPDMATFNSNVYDRILRCAEKLVRTTEEIQSLYGMPIINRRISVTPIAIVAESCQADDYCSVAETLDRAARETGIDFIGGFSALVQKGMTPGDLKLIESIPRALAITEKVCSSVNLASTKAGINMDAVALMGRIIRETARLTADRGAIGCAKLVVFANAPEDNPFMAGAFHGVGEPDCVINVGVSGPGVVNAAVRGLQGSPTLGDIAECIKKTAFKITRMGEMVGREVARRLDAQFGVLDLSLAPTPAVGDSVAAILEAMGLESCGTHGTTAALALLNDAVKKGGSMASSNVGGLSGAFIPVSEDEGMIRAVKRGSLSLDKLEAMTCVCSVGLDMVAVPGDTPAATLSAIIADEMAIGMINKKTTAVRIIPAPGTVVGDVVEFGGLLGSAPVMAVHNFSAETFIGRGGRIPAPIQALTN.

It belongs to the UPF0210 family. As to quaternary structure, homodimer.

In Pelobacter propionicus (strain DSM 2379 / NBRC 103807 / OttBd1), this protein is UPF0210 protein Ppro_0613.